The primary structure comprises 267 residues: 4-hydroxy-tetrahydrodipicolinate reductase (267 aa).

An NAD(+)-binding site is contributed by 8-13; it reads GAAGRM. An NADP(+)-binding site is contributed by arginine 35. NAD(+) contacts are provided by residues 98-100 and 122-125; these read GTT and AANF. Histidine 155 functions as the Proton donor/acceptor in the catalytic mechanism. Histidine 156 serves as a coordination point for (S)-2,3,4,5-tetrahydrodipicolinate. Residue lysine 159 is the Proton donor of the active site. 165-166 is a (S)-2,3,4,5-tetrahydrodipicolinate binding site; sequence GT.

The protein belongs to the DapB family.

The protein resides in the cytoplasm. It catalyses the reaction (S)-2,3,4,5-tetrahydrodipicolinate + NAD(+) + H2O = (2S,4S)-4-hydroxy-2,3,4,5-tetrahydrodipicolinate + NADH + H(+). The catalysed reaction is (S)-2,3,4,5-tetrahydrodipicolinate + NADP(+) + H2O = (2S,4S)-4-hydroxy-2,3,4,5-tetrahydrodipicolinate + NADPH + H(+). It participates in amino-acid biosynthesis; L-lysine biosynthesis via DAP pathway; (S)-tetrahydrodipicolinate from L-aspartate: step 4/4. Its function is as follows. Catalyzes the conversion of 4-hydroxy-tetrahydrodipicolinate (HTPA) to tetrahydrodipicolinate. This is 4-hydroxy-tetrahydrodipicolinate reductase from Azotobacter vinelandii (strain DJ / ATCC BAA-1303).